The following is a 377-amino-acid chain: Chaperone protein DnaJ (377 aa).

Residues 5-70 (DYYEVLEVSR…EKRTIYDRYG (66 aa)) form the J domain. A CR-type zinc finger spans residues 138–215 (GCEKKIDITY…CQGKGYHEET (78 aa)). Residues cysteine 151, cysteine 154, cysteine 167, cysteine 170, cysteine 189, cysteine 192, cysteine 203, and cysteine 206 each contribute to the Zn(2+) site. 4 CXXCXGXG motif repeats span residues 151 to 158 (CEECGGTG), 167 to 174 (CDYCGGQG), 189 to 196 (CPKCHGEG), and 203 to 210 (CPSCQGKG).

It belongs to the DnaJ family. In terms of assembly, homodimer. It depends on Zn(2+) as a cofactor.

The protein resides in the cytoplasm. Functionally, participates actively in the response to hyperosmotic and heat shock by preventing the aggregation of stress-denatured proteins and by disaggregating proteins, also in an autonomous, DnaK-independent fashion. Unfolded proteins bind initially to DnaJ; upon interaction with the DnaJ-bound protein, DnaK hydrolyzes its bound ATP, resulting in the formation of a stable complex. GrpE releases ADP from DnaK; ATP binding to DnaK triggers the release of the substrate protein, thus completing the reaction cycle. Several rounds of ATP-dependent interactions between DnaJ, DnaK and GrpE are required for fully efficient folding. Also involved, together with DnaK and GrpE, in the DNA replication of plasmids through activation of initiation proteins. This chain is Chaperone protein DnaJ, found in Sulfurovum sp. (strain NBC37-1).